Reading from the N-terminus, the 547-residue chain is Cytochrome P450 monooxygenase cpsD (547 aa).

Residues 18–38 form a helical membrane-spanning segment; the sequence is LTGAALVVTLITSVIIVAADL. Cys476 is a binding site for heme. The tract at residues 528–547 is disordered; it reads RRRDARRTHEALGSKLKPEE. Positions 534–547 are enriched in basic and acidic residues; that stretch reads RTHEALGSKLKPEE.

It belongs to the cytochrome P450 family. The cofactor is heme.

It is found in the membrane. The enzyme catalyses campesine B + campesine C + reduced [NADPH--hemoprotein reductase] + O2 = campesine D + oxidized [NADPH--hemoprotein reductase] + 2 H2O + 2 H(+). It catalyses the reaction 2 campesine B + reduced [NADPH--hemoprotein reductase] + O2 = campesine F + oxidized [NADPH--hemoprotein reductase] + 2 H2O + H(+). It carries out the reaction campesine C + campesine A + reduced [NADPH--hemoprotein reductase] + O2 = campesine E + oxidized [NADPH--hemoprotein reductase] + 2 H2O + 2 H(+). The protein operates within alkaloid biosynthesis. Cytochrome P450 monooxygenase; part of the gene cluster that mediates the biosynthesis of campesine G, a dimeric indole piperazine alkaloid that shows good insecticidal activity Galleria mellonella. Within the pathway, cpsD acts as a dimerase that simultaneously catalyzes one C-C bond (C3-C3') and two C-N bonds (C2-N16' and C2'-N16) coupling reactions between campesines B and C to produce a heterodimer with unexpected 6/5/6/6/6/6/5/6 eight-ring scaffold called campesine D. CpsD is also able to catalyze oxidative heterocoupling od campesines A with B to produce campesine F and campesines A with C to produce campesine E. The non-canonical non-ribosomal peptide synthetase cpsA catalyzes the first steps of the pathway by producing L-tryptophanal and L-valinal from their respective amino-acids. These products condensate spontaneously to form trypyl-valyl pyrazine also known as didehydrocampesine A. The NmrA-like family domain-containing oxidoreductase cpsB is the next enzyme in cps pathway and reduces the unstable didehydrocampesine A to campesine A. The methyltransferase cpsF and the acetyltransferase cpsE both recognize N13 of piperazine ring to carry out methylation and acetylation of campesine A to produce campesine C and B, respectively. The cytochrome P450 monooxygenase cpsD then acts as a dimerase that catalyzes oxidative heterocoupling between campesine B and C to produce heterodimers with unexpected 6/5/6/6/6/6/5/6 eight-ring scaffold called campesine D. Finally,the cytochrome P450 monooxygenase cpsC is a regioselective dehydrogenase that catalyzes dehydrogenation reaction towards C2-N1 to produce campesine G. The protein is Cytochrome P450 monooxygenase cpsD of Aspergillus campestris (strain IBT 28561).